We begin with the raw amino-acid sequence, 222 residues long: Dihydrophenazinedicarboxylate synthase (222 aa).

Ser18 is a binding site for substrate. Residues 73–76 and 88–89 contribute to the FMN site; these read RIVV and ST. His90 provides a ligand contact to substrate. FMN-binding positions include 94–95 and Gln117; that span reads QK. 2 residues coordinate substrate: Arg139 and Ser147. Residues 152 to 153 and Arg205 contribute to the FMN site; that span reads QS.

The protein belongs to the pyridoxamine 5'-phosphate oxidase family. The cofactor is FMN.

The enzyme catalyses (1R,6R)-1,4,5,5a,6,9-hexahydrophenazine-1,6-dicarboxylate + O2 = (1R,10aS)-1,4,10,10a-tetrahydrophenazine-1,6-dicarboxylate + H2O2. The catalysed reaction is (1R,10aS)-1,4,10,10a-tetrahydrophenazine-1,6-dicarboxylate + O2 = (5aS)-5,5a-dihydrophenazine-1,6-dicarboxylate + H2O2. It catalyses the reaction (1R,10aS)-1,4,10,10a-tetrahydrophenazine-1-carboxylate + O2 = (10aS)-10,10a-dihydrophenazine-1-carboxylate + H2O2. It carries out the reaction (1R)-1,4,5,10-tetrahydrophenazine-1-carboxylate + O2 = (10aS)-10,10a-dihydrophenazine-1-carboxylate + H2O2. It participates in antibiotic biosynthesis; phenazine biosynthesis. Involved in the biosynthesis of the antibiotic phenazine, a nitrogen-containing heterocyclic molecule having important roles in virulence, competition and biological control. Catalyzes several oxidations in the terminal steps of core phenazine biosynthesis. It oxidizes both hexahydrophenazine-1,6-dicarboxylic acid (HHPDC) and tetrahydrophenazine-1-carboxylic acid (THPCA) and thereby contributes to the generation of both phenazine-1,6-dicarboxylic acid (PDC) and phenazine-1-carboxylic acid (PCA). In Pseudomonas chlororaphis (Pseudomonas aureofaciens), this protein is Dihydrophenazinedicarboxylate synthase.